Reading from the N-terminus, the 88-residue chain is uncharacterized protein (88 aa).

Positions 1 to 54 (AVDAYDDDDNLKNEEGDYYNESDDGYSGDEEEEEKQEEDEQDDDDLQFDDGVPE) are disordered. Over residues 16–53 (GDYYNESDDGYSGDEEEEEKQEEDEQDDDDLQFDDGVP) the composition is skewed to acidic residues.

In terms of tissue distribution, predominantly in developing fruit.

This is an uncharacterized protein from Fragaria ananassa (Strawberry).